A 763-amino-acid polypeptide reads, in one-letter code: Phosphoglycerol transferase I (763 aa).

4 consecutive transmembrane segments (helical) span residues 1–21, 26–46, 77–97, and 108–128; these read MSELLSFALFLASVLIYAWKA, WWFAATLTVLGLFVVLNITLY, ILPGVGIVLALTAVFVSLGWI, and FGYSLLALLLALGSVDASPAF.

This sequence belongs to the OpgB family.

The protein localises to the cell inner membrane. It carries out the reaction a phosphatidylglycerol + a membrane-derived-oligosaccharide D-glucose = a 1,2-diacyl-sn-glycerol + a membrane-derived-oligosaccharide 6-(glycerophospho)-D-glucose.. It participates in glycan metabolism; osmoregulated periplasmic glucan (OPG) biosynthesis. Its function is as follows. Transfers a phosphoglycerol residue from phosphatidylglycerol to the membrane-bound nascent glucan backbones. This chain is Phosphoglycerol transferase I, found in Escherichia fergusonii (strain ATCC 35469 / DSM 13698 / CCUG 18766 / IAM 14443 / JCM 21226 / LMG 7866 / NBRC 102419 / NCTC 12128 / CDC 0568-73).